Reading from the N-terminus, the 292-residue chain is Protease HtpX (292 aa).

Helical transmembrane passes span Ile5–Leu25 and Ser34–Leu54. Zn(2+) is bound at residue His140. Glu141 is a catalytic residue. Zn(2+) is bound at residue His144. 2 helical membrane-spanning segments follow: residues Leu155 to Ile175 and Ile193 to Phe213. A Zn(2+)-binding site is contributed by Glu218.

Belongs to the peptidase M48B family. Zn(2+) serves as cofactor.

It is found in the cell inner membrane. This chain is Protease HtpX, found in Xanthomonas axonopodis pv. citri (strain 306).